We begin with the raw amino-acid sequence, 194 residues long: Peptidyl-tRNA hydrolase (194 aa).

Y17 serves as a coordination point for tRNA. Residue H22 is the Proton acceptor of the active site. Residues F68, N70, and N116 each coordinate tRNA.

Belongs to the PTH family. Monomer.

It localises to the cytoplasm. It carries out the reaction an N-acyl-L-alpha-aminoacyl-tRNA + H2O = an N-acyl-L-amino acid + a tRNA + H(+). Its function is as follows. Hydrolyzes ribosome-free peptidyl-tRNAs (with 1 or more amino acids incorporated), which drop off the ribosome during protein synthesis, or as a result of ribosome stalling. Catalyzes the release of premature peptidyl moieties from peptidyl-tRNA molecules trapped in stalled 50S ribosomal subunits, and thus maintains levels of free tRNAs and 50S ribosomes. This Shewanella halifaxensis (strain HAW-EB4) protein is Peptidyl-tRNA hydrolase.